The chain runs to 238 residues: MNLMLITFNEFKTGISLNDTRAEHLVKILKLKDNDKFKFGILGEKNIYHCIYKKDKKLFFKKIFKVGESNKLKKLYVLIGMIRPIVAKRIIKELASIGTYKIIFFNTELTEKSYLNSKIFKNNDCEKHLIAGAMQGKITYLPKIKIIKNLKESLKYIQQENFEIKILLEKNSEKNLIDIEQINNAVIIVGPERGFTEKEKQLIAQYNFSPYSISTNTLRTETATIAASIITASKLINM.

This sequence belongs to the RNA methyltransferase RsmE family.

It is found in the cytoplasm. It catalyses the reaction uridine(1498) in 16S rRNA + S-adenosyl-L-methionine = N(3)-methyluridine(1498) in 16S rRNA + S-adenosyl-L-homocysteine + H(+). Its function is as follows. Specifically methylates the N3 position of the uracil ring of uridine 1498 (m3U1498) in 16S rRNA. Acts on the fully assembled 30S ribosomal subunit. The protein is Ribosomal RNA small subunit methyltransferase E 1 (rsmE1) of Borreliella burgdorferi (strain ATCC 35210 / DSM 4680 / CIP 102532 / B31) (Borrelia burgdorferi).